Here is a 156-residue protein sequence, read N- to C-terminus: Jun dimerization protein 2 (156 aa).

Positions 56–95 (KRPFDAIKSEDDDDDERKKRRREKNKVAAARCRNRKKERT) are disordered. A bZIP domain is found at 70 to 133 (DERKKRRREK…QQLIVMLNLH (64 aa)). The basic motif stretch occupies residues 72 to 94 (RKKRRREKNKVAAARCRNRKKER). The interval 98–126 (LQKESERLEMLNSDLKSQIEELKSERQQL) is leucine-zipper.

This sequence belongs to the bZIP family. ATF subfamily.

The protein resides in the nucleus. Functionally, component of the AP-1 transcription factor that represses transactivation mediated by the Jun family of proteins. This Danio rerio (Zebrafish) protein is Jun dimerization protein 2 (jdp2).